Here is a 90-residue protein sequence, read N- to C-terminus: Small ribosomal subunit protein uS15c (90 aa).

This sequence belongs to the universal ribosomal protein uS15 family. As to quaternary structure, part of the 30S ribosomal subunit.

The protein localises to the plastid. Its subcellular location is the chloroplast. This chain is Small ribosomal subunit protein uS15c (rps15-A), found in Pelargonium hortorum (Common geranium).